A 235-amino-acid polypeptide reads, in one-letter code: 2,3,4,5-tetrahydropyridine-2,6-dicarboxylate N-acetyltransferase (235 aa).

The protein belongs to the transferase hexapeptide repeat family. DapH subfamily.

The catalysed reaction is (S)-2,3,4,5-tetrahydrodipicolinate + acetyl-CoA + H2O = L-2-acetamido-6-oxoheptanedioate + CoA. The protein operates within amino-acid biosynthesis; L-lysine biosynthesis via DAP pathway; LL-2,6-diaminopimelate from (S)-tetrahydrodipicolinate (acetylase route): step 1/3. In terms of biological role, catalyzes the transfer of an acetyl group from acetyl-CoA to tetrahydrodipicolinate. The protein is 2,3,4,5-tetrahydropyridine-2,6-dicarboxylate N-acetyltransferase of Exiguobacterium sibiricum (strain DSM 17290 / CCUG 55495 / CIP 109462 / JCM 13490 / 255-15).